The chain runs to 496 residues: Glutamyl-tRNA(Gln) amidotransferase subunit A, mitochondrial (496 aa).

Active-site charge relay system residues include lysine 75 and serine 162. The active-site Acyl-ester intermediate is the serine 186.

This sequence belongs to the amidase family. GatA subfamily. As to quaternary structure, subunit of the heterotrimeric GatCAB amidotransferase (AdT) complex, composed of A, B and C subunits.

Its subcellular location is the mitochondrion. The catalysed reaction is L-glutamyl-tRNA(Gln) + L-glutamine + ATP + H2O = L-glutaminyl-tRNA(Gln) + L-glutamate + ADP + phosphate + H(+). Allows the formation of correctly charged Gln-tRNA(Gln) through the transamidation of misacylated Glu-tRNA(Gln) in the mitochondria. The reaction takes place in the presence of glutamine and ATP through an activated gamma-phospho-Glu-tRNA(Gln). This Pediculus humanus subsp. corporis (Body louse) protein is Glutamyl-tRNA(Gln) amidotransferase subunit A, mitochondrial.